Reading from the N-terminus, the 237-residue chain is 2,3-bisphosphoglycerate-dependent phosphoglycerate mutase (237 aa).

Residues 10-17 (RHGESKWN), 23-24 (TG), arginine 62, 89-92 (ERHY), lysine 100, 116-117 (RR), and 185-186 (GN) each bind substrate. Histidine 11 acts as the Tele-phosphohistidine intermediate in catalysis. The active-site Proton donor/acceptor is the glutamate 89.

This sequence belongs to the phosphoglycerate mutase family. BPG-dependent PGAM subfamily. In terms of assembly, homodimer.

The catalysed reaction is (2R)-2-phosphoglycerate = (2R)-3-phosphoglycerate. It functions in the pathway carbohydrate degradation; glycolysis; pyruvate from D-glyceraldehyde 3-phosphate: step 3/5. In terms of biological role, catalyzes the interconversion of 2-phosphoglycerate and 3-phosphoglycerate. The chain is 2,3-bisphosphoglycerate-dependent phosphoglycerate mutase from Baumannia cicadellinicola subsp. Homalodisca coagulata.